Here is a 418-residue protein sequence, read N- to C-terminus: 3-isopropylmalate dehydratase large subunit 1 (418 aa).

[4Fe-4S] cluster-binding residues include cysteine 298, cysteine 358, and cysteine 361.

Belongs to the aconitase/IPM isomerase family. LeuC type 2 subfamily. Heterodimer of LeuC and LeuD. The cofactor is [4Fe-4S] cluster.

It catalyses the reaction (2R,3S)-3-isopropylmalate = (2S)-2-isopropylmalate. The protein operates within amino-acid biosynthesis; L-leucine biosynthesis; L-leucine from 3-methyl-2-oxobutanoate: step 2/4. Its function is as follows. Catalyzes the isomerization between 2-isopropylmalate and 3-isopropylmalate, via the formation of 2-isopropylmaleate. The polypeptide is 3-isopropylmalate dehydratase large subunit 1 (Methanopyrus kandleri (strain AV19 / DSM 6324 / JCM 9639 / NBRC 100938)).